Reading from the N-terminus, the 1368-residue chain is DNA-directed RNA polymerase subunit beta' (1368 aa).

The interval 1–38 (MTSSSKPARKTSKSKSKASKAAEAPAAPSNELSREAPT) is disordered. The segment covering 7-18 (PARKTSKSKSKA) has biased composition (basic residues). The span at 19–29 (SKAAEAPAAPS) shows a compositional bias: low complexity. Zn(2+) contacts are provided by C250, C318, C325, and C328. Positions 1340–1368 (AGEELAEEHVPDPGALEGLQEEGLLSQDS) are disordered. Positions 1353-1368 (GALEGLQEEGLLSQDS) are enriched in low complexity.

It belongs to the RNA polymerase beta' chain family. RpoC2 subfamily. In terms of assembly, in cyanobacteria the RNAP catalytic core is composed of 2 alpha, 1 beta, 1 beta', 1 gamma and 1 omega subunit. When a sigma factor is associated with the core the holoenzyme is formed, which can initiate transcription. Zn(2+) serves as cofactor.

The catalysed reaction is RNA(n) + a ribonucleoside 5'-triphosphate = RNA(n+1) + diphosphate. Its function is as follows. DNA-dependent RNA polymerase catalyzes the transcription of DNA into RNA using the four ribonucleoside triphosphates as substrates. This chain is DNA-directed RNA polymerase subunit beta', found in Synechococcus sp. (strain RCC307).